A 288-amino-acid polypeptide reads, in one-letter code: Alpha-acetolactate decarboxylase (288 aa).

A signal peptide spans 1-23 (MNIKYFLIFLILLAVTSFTLFSG).

The protein belongs to the alpha-acetolactate decarboxylase family.

It catalyses the reaction (2S)-2-acetolactate + H(+) = (R)-acetoin + CO2. The protein operates within polyol metabolism; (R,R)-butane-2,3-diol biosynthesis; (R,R)-butane-2,3-diol from pyruvate: step 2/3. Functionally, converts acetolactate into acetoin. The protein is Alpha-acetolactate decarboxylase of Methanosarcina mazei (strain ATCC BAA-159 / DSM 3647 / Goe1 / Go1 / JCM 11833 / OCM 88) (Methanosarcina frisia).